A 241-amino-acid polypeptide reads, in one-letter code: ATP synthase subunit a (241 aa).

5 helical membrane passes run 30 to 50 (GQVF…ISLG), 91 to 111 (FIGT…LIPW), 128 to 148 (INTT…AGLS), 193 to 213 (LVVG…VMFL), and 214 to 234 (GLFT…YYIG).

Belongs to the ATPase A chain family. As to quaternary structure, F-type ATPases have 2 components, CF(1) - the catalytic core - and CF(0) - the membrane proton channel. CF(1) has five subunits: alpha(3), beta(3), gamma(1), delta(1), epsilon(1). CF(0) has four main subunits: a, b, b' and c.

Its subcellular location is the cellular thylakoid membrane. In terms of biological role, key component of the proton channel; it plays a direct role in the translocation of protons across the membrane. This chain is ATP synthase subunit a, found in Prochlorococcus marinus (strain MIT 9515).